Here is a 393-residue protein sequence, read N- to C-terminus: tRNA(Met) cytidine acetate ligase (393 aa).

Positions 81, 142, and 167 each coordinate ATP.

Belongs to the TmcAL family.

The protein resides in the cytoplasm. It carries out the reaction cytidine(34) in elongator tRNA(Met) + acetate + ATP = N(4)-acetylcytidine(34) in elongator tRNA(Met) + AMP + diphosphate. Its function is as follows. Catalyzes the formation of N(4)-acetylcytidine (ac(4)C) at the wobble position of elongator tRNA(Met), using acetate and ATP as substrates. First activates an acetate ion to form acetyladenylate (Ac-AMP) and then transfers the acetyl group to tRNA to form ac(4)C34. The protein is tRNA(Met) cytidine acetate ligase of Bacillus cereus (strain Q1).